Consider the following 440-residue polypeptide: GTPase Der (440 aa).

EngA-type G domains lie at alanine 5–glutamate 167 and isoleucine 178–serine 353. GTP-binding positions include glycine 11–serine 18, aspartate 58–isoleucine 62, asparagine 120–glutamate 123, glycine 184–serine 191, aspartate 231–leucine 235, and asparagine 296–aspartate 299. A KH-like domain is found at lysine 354–glutamine 438.

The protein belongs to the TRAFAC class TrmE-Era-EngA-EngB-Septin-like GTPase superfamily. EngA (Der) GTPase family. Associates with the 50S ribosomal subunit.

In terms of biological role, GTPase that plays an essential role in the late steps of ribosome biogenesis. This is GTPase Der from Natranaerobius thermophilus (strain ATCC BAA-1301 / DSM 18059 / JW/NM-WN-LF).